The primary structure comprises 1072 residues: Carbamoyl phosphate synthase large chain (1072 aa).

Residues 1–401 are carboxyphosphate synthetic domain; the sequence is MPKRLDINTI…SLLKAVRSLE (401 aa). The ATP site is built by arginine 129, arginine 169, glycine 175, glycine 176, lysine 208, isoleucine 210, glutamate 215, glycine 241, valine 242, histidine 243, glutamine 284, and glutamate 298. The region spanning 133-327 is the ATP-grasp 1 domain; it reads RTLMQELNEP…IAKLAAKIAV (195 aa). Residues glutamine 284, glutamate 298, and asparagine 300 each contribute to the Mg(2+) site. Mn(2+)-binding residues include glutamine 284, glutamate 298, and asparagine 300. Residues 402 to 546 form an oligomerization domain region; that stretch reads LGIYHLELDH…YSTYADENES (145 aa). The tract at residues 547-929 is carbamoyl phosphate synthetic domain; the sequence is IVTDRKSVVV…ALYKGLVASG (383 aa). The ATP-grasp 2 domain occupies 671-861; the sequence is EAALTKLGIP…MANVATKVIL (191 aa). Residues arginine 707, arginine 746, glutamate 752, glycine 777, valine 778, histidine 779, serine 780, glutamine 820, and glutamate 832 each contribute to the ATP site. Mg(2+)-binding residues include glutamine 820, glutamate 832, and asparagine 834. 3 residues coordinate Mn(2+): glutamine 820, glutamate 832, and asparagine 834. An MGS-like domain is found at 930–1072; it reads INIPTHGSVI…QTKRHEVVHA (143 aa). The interval 930–1072 is allosteric domain; that stretch reads INIPTHGSVI…QTKRHEVVHA (143 aa).

It belongs to the CarB family. In terms of assembly, composed of two chains; the small (or glutamine) chain promotes the hydrolysis of glutamine to ammonia, which is used by the large (or ammonia) chain to synthesize carbamoyl phosphate. Tetramer of heterodimers (alpha,beta)4. Mg(2+) serves as cofactor. It depends on Mn(2+) as a cofactor.

It catalyses the reaction hydrogencarbonate + L-glutamine + 2 ATP + H2O = carbamoyl phosphate + L-glutamate + 2 ADP + phosphate + 2 H(+). The enzyme catalyses hydrogencarbonate + NH4(+) + 2 ATP = carbamoyl phosphate + 2 ADP + phosphate + 2 H(+). It functions in the pathway amino-acid biosynthesis; L-arginine biosynthesis; carbamoyl phosphate from bicarbonate: step 1/1. Its pathway is pyrimidine metabolism; UMP biosynthesis via de novo pathway; (S)-dihydroorotate from bicarbonate: step 1/3. In terms of biological role, large subunit of the glutamine-dependent carbamoyl phosphate synthetase (CPSase). CPSase catalyzes the formation of carbamoyl phosphate from the ammonia moiety of glutamine, carbonate, and phosphate donated by ATP, constituting the first step of 2 biosynthetic pathways, one leading to arginine and/or urea and the other to pyrimidine nucleotides. The large subunit (synthetase) binds the substrates ammonia (free or transferred from glutamine from the small subunit), hydrogencarbonate and ATP and carries out an ATP-coupled ligase reaction, activating hydrogencarbonate by forming carboxy phosphate which reacts with ammonia to form carbamoyl phosphate. The sequence is that of Carbamoyl phosphate synthase large chain from Bacillus thuringiensis subsp. konkukian (strain 97-27).